Here is a 181-residue protein sequence, read N- to C-terminus: Protein GrpE (181 aa).

A compositionally biased stretch (polar residues) spans M1 to T10. The tract at residues M1–A33 is disordered. Low complexity predominate over residues Q21 to A33.

This sequence belongs to the GrpE family. As to quaternary structure, homodimer.

The protein resides in the cytoplasm. In terms of biological role, participates actively in the response to hyperosmotic and heat shock by preventing the aggregation of stress-denatured proteins, in association with DnaK and GrpE. It is the nucleotide exchange factor for DnaK and may function as a thermosensor. Unfolded proteins bind initially to DnaJ; upon interaction with the DnaJ-bound protein, DnaK hydrolyzes its bound ATP, resulting in the formation of a stable complex. GrpE releases ADP from DnaK; ATP binding to DnaK triggers the release of the substrate protein, thus completing the reaction cycle. Several rounds of ATP-dependent interactions between DnaJ, DnaK and GrpE are required for fully efficient folding. This Burkholderia cenocepacia (strain ATCC BAA-245 / DSM 16553 / LMG 16656 / NCTC 13227 / J2315 / CF5610) (Burkholderia cepacia (strain J2315)) protein is Protein GrpE.